Reading from the N-terminus, the 392-residue chain is General receptor for phosphoinositides 1-associated scaffold protein (392 aa).

Residues 1–50 (MTLRRLRKLQQKEEATAAPDPAGRAPDSEAARAAPLPSGPPAAAAPPGAP) form a disordered region. A compositionally biased stretch (pro residues) spans 37-49 (PSGPPAAAAPPGA). Thr76 is modified (phosphothreonine). Ser93 is subject to Phosphoserine. Residues 100–189 (VLTLEKGDNQ…VLRLETLYGT (90 aa)) form the PDZ domain. An interaction with PSCD3 region spans residues 180–257 (VLRLETLYGT…GAGLLPGSLP (78 aa)). At Tyr236 the chain carries Phosphotyrosine. Omega-N-methylarginine is present on Arg269. Residues 294–315 (PQALPPPPPPARALGPSSAETP) are disordered. Ser384 carries the phosphoserine modification.

In terms of assembly, heteromer. Composed of TAMALIN, CYTH2 and at least one GRM1. Also interacts with GRM2, GRM3 and GRM5. Interacts with CYTH3. As to expression, highly expressed in brain, heart and lung, and to a lower extent in embryo, kidney and ovary.

The protein resides in the cytoplasm. The protein localises to the perinuclear region. It is found in the cell membrane. It localises to the postsynaptic cell membrane. Functionally, plays a role in intracellular trafficking and contributes to the macromolecular organization of group 1 metabotropic glutamate receptors (mGluRs) at synapses. This chain is General receptor for phosphoinositides 1-associated scaffold protein, found in Mus musculus (Mouse).